The primary structure comprises 482 residues: MALPPFFAQSRQGPPPPQPPPSAPFGCPPPPLPSPAFPPPLPQRPGPFPGASAPFLQPPLALQPRAPAEASRGGGGGGAFFPVPPPPLPPPPPQCRPFPGPDAVERPRPPPPGPGPPWSPRWAEAPPPPDVLGDAALQRLRDRQWLEAVFGNPRRPGGLRTPRTPAGPSLGEVRARLRSALRLVRRLRSLGQSLREAEADGAAWASLHAQAAPLRAELAERLQPLRQAAYVGEARRRLERVRRRVRVRERARDRRLSGRRGAQRTEREQEIDRWRVKCVQEVEEKKRDEELKAAADGVLAEVRKKQSDTKRMVDILRALEKLRKLRKEAAARKGVCPPASADETFEHHLQRLRKLIKKRSELYEAEERALRVMLEGEQEEERRRELEKKQRKEKEKLLLQKREIESKLFGDPDEFPLAHLLQPFRQYYLQAEHSLPALIQIRHDWDQYLVPSDHPKGNSVPQGWVLPPLPSNDIWATAIQLH.

Disordered regions lie at residues methionine 1–alanine 136 and glycine 151–leucine 170. The segment covering glycine 13 to phenylalanine 48 has biased composition (pro residues). Positions proline 49–serine 71 are enriched in low complexity. 2 stretches are compositionally biased toward pro residues: residues proline 82–glycine 100 and proline 109–aspartate 130. Positions glycine 151–proline 168 are enriched in low complexity. Positions glutamate 233 to leucine 408 form a coiled coil.

Interacts with RBM40. Component of the U11/U12 snRNPs that are part of the U12-type spliceosome. Highly expressed in testis, thymus and lymph nodes. Detected at low levels in embryonic stem cells.

The protein resides in the nucleus. In terms of biological role, promotes apoptosis when overexpressed. The chain is Programmed cell death protein 7 (Pdcd7) from Mus musculus (Mouse).